Here is a 147-residue protein sequence, read N- to C-terminus: Small ribosomal subunit protein bS6m (147 aa).

This sequence belongs to the bacterial ribosomal protein bS6 family. In terms of assembly, component of the mitochondrial ribosome small subunit (28S) which comprises a 12S rRNA and about 30 distinct proteins.

It localises to the mitochondrion. This chain is Small ribosomal subunit protein bS6m (mRpS6), found in Drosophila melanogaster (Fruit fly).